We begin with the raw amino-acid sequence, 274 residues long: Adenosylcobinamide-GDP ribazoletransferase (274 aa).

7 consecutive transmembrane segments (helical) span residues 46-66 (VMASVPFIGIVLGIVGGAIAF), 69-89 (TSLGVASIVAATVIVCFWELF), 117-137 (IIADPATGLIGMGACLISILI), 151-173 (WWMVMITPMIGRFCAIFGAHSRL), 192-212 (HTIIAWLCVLLVICIGVPLAM), 216-236 (ELITITILGLLCSVTLALVEI), and 253-273 (FIMHSATALCALVFAVGVGIV).

Belongs to the CobS family. Requires Mg(2+) as cofactor.

It is found in the cell membrane. The enzyme catalyses alpha-ribazole + adenosylcob(III)inamide-GDP = adenosylcob(III)alamin + GMP + H(+). The catalysed reaction is alpha-ribazole 5'-phosphate + adenosylcob(III)inamide-GDP = adenosylcob(III)alamin 5'-phosphate + GMP + H(+). It participates in cofactor biosynthesis; adenosylcobalamin biosynthesis; adenosylcobalamin from cob(II)yrinate a,c-diamide: step 7/7. Functionally, joins adenosylcobinamide-GDP and alpha-ribazole to generate adenosylcobalamin (Ado-cobalamin). Also synthesizes adenosylcobalamin 5'-phosphate from adenosylcobinamide-GDP and alpha-ribazole 5'-phosphate. The protein is Adenosylcobinamide-GDP ribazoletransferase of Corynebacterium diphtheriae (strain ATCC 700971 / NCTC 13129 / Biotype gravis).